A 177-amino-acid polypeptide reads, in one-letter code: 3-hydroxydecanoyl-[acyl-carrier-protein] dehydratase (177 aa).

The active site involves His-76.

This sequence belongs to the thioester dehydratase family. FabA subfamily. As to quaternary structure, homodimer.

It is found in the cytoplasm. It catalyses the reaction a (3R)-hydroxyacyl-[ACP] = a (2E)-enoyl-[ACP] + H2O. The enzyme catalyses (3R)-hydroxydecanoyl-[ACP] = (2E)-decenoyl-[ACP] + H2O. It carries out the reaction (2E)-decenoyl-[ACP] = (3Z)-decenoyl-[ACP]. Its pathway is lipid metabolism; fatty acid biosynthesis. Its function is as follows. Necessary for the introduction of cis unsaturation into fatty acids. Catalyzes the dehydration of (3R)-3-hydroxydecanoyl-ACP to E-(2)-decenoyl-ACP and then its isomerization to Z-(3)-decenoyl-ACP. Can catalyze the dehydratase reaction for beta-hydroxyacyl-ACPs with saturated chain lengths up to 16:0, being most active on intermediate chain length. In Actinobacillus succinogenes (strain ATCC 55618 / DSM 22257 / CCUG 43843 / 130Z), this protein is 3-hydroxydecanoyl-[acyl-carrier-protein] dehydratase.